The chain runs to 391 residues: ATP-sensitive inward rectifier potassium channel 1 (391 aa).

Topologically, residues 1 to 77 are cytoplasmic; sequence MGASERSVFR…IWTTVLDLKW (77 aa). Position 44 is a phosphoserine; by SGK1 (Ser-44). The helical transmembrane segment at 78–102 threads the bilayer; the sequence is RYKMTVFITAFLGSWFLFGLLWYVV. At 103 to 127 the chain is on the extracellular side; sequence AYVHKDLPEFYPPDNRTPCVENING. The N-linked (GlcNAc...) asparagine glycan is linked to Asn-117. Positions 128-139 form an intramembrane region, helical; Pore-forming; the sequence is MTSAFLFSLETQ. The segment at residues 140–146 is an intramembrane region (pore-forming); that stretch reads VTIGYGF. The Selectivity filter signature appears at 141 to 146; it reads TIGYGF. The Extracellular portion of the chain corresponds to 147-155; it reads RFVTEQCAT. Residues 156-177 form a helical membrane-spanning segment; sequence AIFLLIFQSILGVIINSFMCGA. Residues 178 to 391 lie on the Cytoplasmic side of the membrane; that stretch reads ILAKISRPKK…EVDETDDTQM (214 aa). The polyphosphoinositide (PIP2)-binding stretch occupies residues 180–207; the sequence is AKISRPKKRAKTITFSKNAVISKRGGKL. 223-230 lines the ATP pocket; it reads GSHIYGKL.

The protein belongs to the inward rectifier-type potassium channel (TC 1.A.2.1) family. KCNJ1 subfamily. In terms of assembly, interacts with SGK1 and SLC9A3R2/NHERF2. In terms of processing, phosphorylation at Ser-44 by SGK1 is necessary for its expression at the cell membrane. As to expression, mainly in kidney (renal cortex, medulla and papilla). Kidney.

The protein localises to the cell membrane. It catalyses the reaction K(+)(in) = K(+)(out). Inhibited by WNK3. Activated by phosphatidylinositol 4,5 biphosphate (PtdIns(4,5)P2). Functionally, inward rectifier potassium channels are characterized by a greater tendency to allow potassium to flow into the cell rather than out of it. Their voltage dependence is regulated by the concentration of extracellular potassium; as external potassium is raised, the voltage range of the channel opening shifts to more positive voltages. The inward rectification is mainly due to the blockage of outward current by internal magnesium. This channel is activated by internal ATP and can be blocked by external barium. In the kidney, probably plays a major role in potassium homeostasis. In terms of biological role, inward rectifier potassium channels are characterized by a greater tendency to allow potassium to flow into the cell rather than out of it. Their voltage dependence is regulated by the concentration of extracellular potassium; as external potassium is raised, the voltage range of the channel opening shifts to more positive voltages. The chain is ATP-sensitive inward rectifier potassium channel 1 (Kcnj1) from Rattus norvegicus (Rat).